The chain runs to 159 residues: Gigasin-1 (159 aa).

Disordered stretches follow at residues 1-33 and 80-159; these read GKAT…HDQT and KESY…KYRR.

As to expression, component of the organic matrix of calcified shell layers.

In Magallana gigas (Pacific oyster), this protein is Gigasin-1.